Consider the following 288-residue polypeptide: MKDRTQELRTAKDSDDDDDVTVTVDRDRFMDEFFEQVEEIRGFIDKIAENVEEVKRKHSAILASPNPDEKTKEELEELMSDIKKTANKVRSKLKSIEQSIEQEEGLNRSSADLRIRKTQHSTLSRKFVEVMSEYNATQSDYRERCKGRIQRQLEITGRTTTSEELEDMLESGNPAIFASGIIMDSSISKQALSEIETRHSEIIKLETSIRELHDMFMDMAMLVESQGEMIDRIEYNVEHAVDYVERAVSDTKKAVKYQSKARRKKIMIIICCVILGIIIASTIGGIFG.

Over residues 1 to 13 (MKDRTQELRTAKD) the composition is skewed to basic and acidic residues. The interval 1–20 (MKDRTQELRTAKDSDDDDDV) is disordered. Topologically, residues 1–265 (MKDRTQELRT…KYQSKARRKK (265 aa)) are cytoplasmic. Residues Ser-14, Ser-64, and Ser-95 each carry the phosphoserine modification. The stretch at 68–109 (DEKTKEELEELMSDIKKTANKVRSKLKSIEQSIEQEEGLNRS) forms a coiled coil. Ser-188 carries the post-translational modification Phosphoserine; by DAPK1. Residues 192 to 254 (LSEIETRHSE…ERAVSDTKKA (63 aa)) enclose the t-SNARE coiled-coil homology domain. Residues Lys-252, Lys-253, and Lys-256 each participate in a glycyl lysine isopeptide (Lys-Gly) (interchain with G-Cter in SUMO) cross-link. Residues 266–286 (IMIIICCVILGIIIASTIGGI) traverse the membrane as a helical; Anchor for type IV membrane protein segment. The Extracellular portion of the chain corresponds to 287–288 (FG).

The protein belongs to the syntaxin family. As to quaternary structure, part of the SNARE core complex containing SNAP25, VAMP2 and STX1A; this complex constitutes the basic catalytic machinery of the complex neurotransmitter release apparatus. The SNARE complex interacts with CPLX1. Interacts with STXBP1. The interaction with STXBP1 promotes assembly of the SNARE complex. Interacts (via C-terminus) with KCNB1 (via C-terminus); the interaction increases in a calcium-dependent manner and induces a pore-independent enhancement of exocytosis in neuroendocrine cells, chromaffin cells, pancreatic beta cells and from the soma of dorsal root ganglia (DRG) neurons. Interacts with SYTL4. Interacts with STXBP6. Interacts with PLCL1 (via C2 domain). Interacts with OTOF. Interacts with LGI3. Interacts (via the H3 domain) with SLC6A4 (via the N-terminus); this interaction regulates SLC4A6 channel conductance in thalamocortical neurons. Interacts with SYT6 and SYT8; the interaction is Ca(2+)-dependent. Interacts with VAMP8. Interacts with SNAP23. Interacts with VAPA and SYBU. Interacts with PRRT2. Interacts with SEPT8. Interacts with STXBP5L. Interacts with synaptotagmin-1/SYT1. Interacts with SEPTIN5; in the cerebellar cortex. Interacts with SEPTIN4; in the striatum. Post-translationally, phosphorylated by CK2. Phosphorylation at Ser-188 by DAPK1 significantly decreases its interaction with STXBP1. In terms of processing, phosphorylated by CK2. Phosphorylation at Ser-188 by DAPK1 significantly decreases its interaction with STXBP1. Sumoylated, sumoylation is required for regulation of synaptic vesicle endocytosis. In terms of tissue distribution, expressed in the striatum (at protein level). Expressed in the ileum.

The protein localises to the cytoplasmic vesicle. It localises to the secretory vesicle. The protein resides in the synaptic vesicle membrane. It is found in the synapse. Its subcellular location is the synaptosome. The protein localises to the cell membrane. Functionally, plays an essential role in hormone and neurotransmitter calcium-dependent exocytosis and endocytosis. Part of the SNARE (Soluble NSF Attachment Receptor) complex composed of SNAP25, STX1A and VAMP2 which mediates the fusion of synaptic vesicles with the presynaptic plasma membrane. STX1A and SNAP25 are localized on the plasma membrane while VAMP2 resides in synaptic vesicles. The pairing of the three SNAREs from the N-terminal SNARE motifs to the C-terminal anchors leads to the formation of the SNARE complex, which brings membranes into close proximity and results in final fusion. Participates in the calcium-dependent regulation of acrosomal exocytosis in sperm. Also plays an important role in the exocytosis of hormones such as insulin or glucagon-like peptide 1 (GLP-1). The protein is Syntaxin-1A (Stx1a) of Mus musculus (Mouse).